The chain runs to 225 residues: Lectin (225 aa).

As to quaternary structure, homotetramer.

In terms of biological role, chitin-binding lectin. Agglutinates rabbit erythrocytes, but not human erythrocytes. This chain is Lectin, found in Vachellia farnesiana (Sweet acacia).